We begin with the raw amino-acid sequence, 266 residues long: Integral membrane protein 2B (266 aa).

Residues 1-54 (MVKVTFNSALAQKEAKKXEPKSGEEALIIPPDTXAVDCKDPDEVVPVGQRRAWC) are Cytoplasmic-facing. Residues 55-75 (WCMCFGLAFMLAGVILGGAYL) form a helical; Signal-anchor for type II membrane protein membrane-spanning segment. Residues 76–266 (YKYFALQPDD…KFAVETLICS (191 aa)) are Lumenal-facing. The necessary for interaction with APP and inhibitor effects on APP processing stretch occupies residues 102–134 (EPPANAPAARYQTIEENIKIFEEDGVEFISVPV). In terms of domain architecture, BRICHOS spans 137–231 (FADSDPANIV…LCHDKETYKL (95 aa)). Disulfide bonds link cysteine 164/cysteine 223 and cysteine 248/cysteine 265. Asparagine 170 carries N-linked (GlcNAc...) asparagine glycosylation.

This sequence belongs to the ITM2 family. In terms of assembly, homodimer; disulfide-linked. Interacts with SPPL2A and SPPL2B. Interacts with APP. Mature BRI2 (mBRI2) interacts with the APP amyloid-beta A4 protein; the interaction occurs at the cell surface and in the endocytic compartments and enable alpha- and beta-secretase-induced APP cleavage inhibition. Mature BRI2 (mBRI2) interacts with the APP C99; the interaction occurs in the endocytic compartments and enable gamma-secretase-induced C99 cleavage inhibition. May form heterodimers with Bri23 peptide and APP amyloid-beta protein 40. Interacts with ADAM7 in sperm; the interaction increases following capacitation. The ectodomain C-terminal part of the imBRI2 is processed by furin producing a secreted Bri23 peptide and a mature BRI2, membrane form (mBRI2). The remaining part of the ectodomain of mBRI2 containing the BRICHOS domain is cleaved by ADAM10 and is secreted (BRI2C, soluble form). The membrane-bound N-terminal fragment (BRI2C, membrane form) is further proteolytically processed by SPPL2A and SPPL2B through regulated intramembrane proteolysis producing a secreted C-peptide and a BRI2 intracellular domain (BRI2 ICD) released in the cytosol. Shedding by ADAM10 facilitates intramembrane cleavage but is not absolutely required for BRI2 ICD generation. In terms of processing, glycosylation at Asn-170 is important for cell surface localization, but doesn't affect furin- and ADAM10-induced proteolytic processing.

The protein localises to the golgi apparatus membrane. Its subcellular location is the cell membrane. The protein resides in the endosome membrane. It is found in the secreted. Functionally, plays a regulatory role in the processing of the amyloid-beta A4 precursor protein (APP) and acts as an inhibitor of the amyloid-beta peptide aggregation and fibrils deposition. Plays a role in the induction of neurite outgrowth. Functions as a protease inhibitor by blocking access of secretases to APP cleavage sites. Its function is as follows. Mature BRI2 (mBRI2) functions as a modulator of the amyloid-beta A4 precursor protein (APP) processing leading to a strong reduction in the secretion of secretase-processed amyloid-beta protein 40 and amyloid-beta protein 42. Bri23 peptide prevents aggregation of APP amyloid-beta protein 42 into toxic oligomers. In Sus scrofa (Pig), this protein is Integral membrane protein 2B (ITM2B).